The sequence spans 516 residues: L-amino acid oxidase bordonein-L (516 aa).

A signal peptide spans 1–18 (MNVFFMFSLLFLAALGSC). Cysteines 28 and 189 form a disulfide. FAD is bound by residues 61–62 (MA), 81–82 (EA), R89, and 103–106 (GPMR). Substrate-binding residues include R106 and H239. An FAD-binding site is contributed by V279. C349 and C430 form a disulfide bridge. N-linked (GlcNAc...) asparagine glycosylation is present at N379. Y390 is a substrate binding site. FAD contacts are provided by residues E475 and 482-487 (GWIDST). Residue 482-483 (GW) coordinates substrate.

As to quaternary structure, homodimer; non-covalently linked. FAD is required as a cofactor. Post-translationally, N-glycosylated. N-glycan probably consists of the disaccharide N-acetylglucosamine-fucose (HexNAc-Fuc). As to expression, expressed by the venom gland.

It localises to the secreted. It carries out the reaction an L-alpha-amino acid + O2 + H2O = a 2-oxocarboxylate + H2O2 + NH4(+). The enzyme catalyses L-leucine + O2 + H2O = 4-methyl-2-oxopentanoate + H2O2 + NH4(+). The catalysed reaction is L-phenylalanine + O2 + H2O = 3-phenylpyruvate + H2O2 + NH4(+). It catalyses the reaction L-tryptophan + O2 + H2O = indole-3-pyruvate + H2O2 + NH4(+). It carries out the reaction L-methionine + O2 + H2O = 4-methylsulfanyl-2-oxobutanoate + H2O2 + NH4(+). The enzyme catalyses L-isoleucine + O2 + H2O = (S)-3-methyl-2-oxopentanoate + H2O2 + NH4(+). The catalysed reaction is L-arginine + O2 + H2O = 5-guanidino-2-oxopentanoate + H2O2 + NH4(+). It catalyses the reaction L-histidine + O2 + H2O = 3-(imidazol-5-yl)pyruvate + H2O2 + NH4(+). Its function is as follows. Catalyzes an oxidative deamination of predominantly hydrophobic and aromatic L-amino acids, thus producing hydrogen peroxide that may contribute to the diverse toxic effects of this enzyme. Is highly active on L-Met, L-Leu, L-Trp, and L-Phe, moderately active on L-Ile, L-His, and L-Arg, and weakly or not active on L-Gln, L-Val, L-Asn, L-Ala, L-Lys, L-Ser, L-Thr, L-Pro, L-Asp, L-Gly, L-Tyr, L-Cys and L-Glu. This enzyme exhibits diverse biological activities, such as hemorrhage, hemolysis, edema, apoptosis of vascular endothelial cells or tumor cell lines, antibacterial and antiparasitic activities, as well as regulation of platelet aggregation. Its effect on platelets is controversial, since it either induces aggregation or inhibits agonist-induced aggregation. These different effects are probably due to different experimental conditions. In vitro, the enzyme exhibits cytotoxicity against fibroblast cell line and kills Leishmania amazonensis promastigotes, intensified by substrate addition. The sequence is that of L-amino acid oxidase bordonein-L from Crotalus durissus terrificus (South American rattlesnake).